A 1187-amino-acid chain; its full sequence is DNA-directed RNA polymerase subunit beta (1187 aa).

The segment at 1150 to 1187 (KDEDDDPASSADDLGFNIGARPDAAAKEDQKAEEPEYQ) is disordered. The segment covering 1173–1187 (AAAKEDQKAEEPEYQ) has biased composition (basic and acidic residues).

The protein belongs to the RNA polymerase beta chain family. The RNAP catalytic core consists of 2 alpha, 1 beta, 1 beta' and 1 omega subunit. When a sigma factor is associated with the core the holoenzyme is formed, which can initiate transcription.

The enzyme catalyses RNA(n) + a ribonucleoside 5'-triphosphate = RNA(n+1) + diphosphate. In terms of biological role, DNA-dependent RNA polymerase catalyzes the transcription of DNA into RNA using the four ribonucleoside triphosphates as substrates. The polypeptide is DNA-directed RNA polymerase subunit beta (Bifidobacterium longum (strain NCC 2705)).